The primary structure comprises 81 residues: Photosystem I iron-sulfur center (81 aa).

4Fe-4S ferredoxin-type domains follow at residues 2-31 (AHSV…MVPW) and 39-68 (IASA…VRVY). Cys11, Cys14, Cys17, Cys21, Cys48, Cys51, Cys54, and Cys58 together coordinate [4Fe-4S] cluster.

In terms of assembly, the eukaryotic PSI reaction center is composed of at least 11 subunits. It depends on [4Fe-4S] cluster as a cofactor.

It is found in the plastid. Its subcellular location is the chloroplast thylakoid membrane. The enzyme catalyses reduced [plastocyanin] + hnu + oxidized [2Fe-2S]-[ferredoxin] = oxidized [plastocyanin] + reduced [2Fe-2S]-[ferredoxin]. Its function is as follows. Apoprotein for the two 4Fe-4S centers FA and FB of photosystem I (PSI); essential for photochemical activity. FB is the terminal electron acceptor of PSI, donating electrons to ferredoxin. The C-terminus interacts with PsaA/B/D and helps assemble the protein into the PSI complex. Required for binding of PsaD and PsaE to PSI. PSI is a plastocyanin-ferredoxin oxidoreductase, converting photonic excitation into a charge separation, which transfers an electron from the donor P700 chlorophyll pair to the spectroscopically characterized acceptors A0, A1, FX, FA and FB in turn. The sequence is that of Photosystem I iron-sulfur center from Mesostigma viride (Green alga).